The chain runs to 525 residues: Protein BSP1 (525 aa).

Disordered regions lie at residues 21–40, 98–262, 285–325, and 339–525; these read INKP…TPIE, QQQH…PSKM, LSSE…VPPK, and DKTG…PTKI. Residues 110–122 show a composition bias toward basic and acidic residues; that stretch reads IEPVRHIIPDRHS. Residues 148–162 are compositionally biased toward polar residues; sequence NRASSENVVKSTTSA. Composition is skewed to basic and acidic residues over residues 171-182, 201-223, and 230-242; these read YKDDITAKKLDV, DKNK…EDNK, and KDQD…KPTR. Over residues 251 to 261 the composition is skewed to polar residues; it reads QLKSPPQSPSK. Low complexity predominate over residues 285-297; it reads LSSEENSRSSLSE. 2 stretches are compositionally biased toward basic and acidic residues: residues 314–325 and 339–354; these read KAEKKKPVVPPK and DKTG…EPEF. Polar residues predominate over residues 382–398; that stretch reads QNLSKNTENKKSVAQSK. Acidic residues predominate over residues 447 to 456; that stretch reads EESEISDSEP. The segment covering 510–525 has biased composition (basic residues); that stretch reads NKSRSRGPKRKLPTKI.

It localises to the cell membrane. The protein resides in the cytoplasm. The protein localises to the cytoskeleton. Its subcellular location is the actin patch. Its function is as follows. Cortical patch protein involved in endocytosis. This chain is Protein BSP1 (BSP1), found in Candida glabrata (strain ATCC 2001 / BCRC 20586 / JCM 3761 / NBRC 0622 / NRRL Y-65 / CBS 138) (Yeast).